The sequence spans 320 residues: Olfactory receptor 7C1 (320 aa).

Over 1–25 the chain is Extracellular; that stretch reads METGNQTHAQEFLLLGFSATSEIQF. A glycan (N-linked (GlcNAc...) asparagine) is linked at Asn5. Residues 26–46 traverse the membrane as a helical segment; sequence ILFGLFLSMYLVTFTGNLLII. Topologically, residues 47–54 are cytoplasmic; that stretch reads LAICSDSH. A helical transmembrane segment spans residues 55-75; it reads LHTPMYFFLSNLSFADLCFTS. Residues 76–99 are Extracellular-facing; the sequence is TTVPKMLLNILTQNKFITYAGCLS. A disulfide bond links Cys97 and Cys189. A helical transmembrane segment spans residues 100–120; sequence QIFFFTSFGCLDNLLLTVMAY. At 121-139 the chain is on the cytoplasmic side; that stretch reads DRFVAVCHPLHYTVIMNPQ. The helical transmembrane segment at 140–160 threads the bilayer; it reads LCGLLVLGSWCISVMGSLLET. The Extracellular portion of the chain corresponds to 161–197; it reads LTVLRLSFCTEMEIPHFFCDLLEVLKLACSDTFINNV. A helical membrane pass occupies residues 198-217; that stretch reads VIYFATGVLGVISFTGIFFS. At 218–237 the chain is on the cytoplasmic side; that stretch reads YYKIVFSILRISSAGRKHKA. The helical transmembrane segment at 238 to 258 threads the bilayer; that stretch reads FSTCGSHLSVVTLFYGTGFGV. The Extracellular segment spans residues 259-271; the sequence is YLSSAATPSSRTS. A helical membrane pass occupies residues 272–292; the sequence is LVASVMYTMVTPMLNPFIYSL. At 293–313 the chain is on the cytoplasmic side; the sequence is RNTDMKRALGRLLSRATFFNG.

It belongs to the G-protein coupled receptor 1 family.

It localises to the cell membrane. Odorant receptor. The protein is Olfactory receptor 7C1 (OR7C1) of Homo sapiens (Human).